Here is a 322-residue protein sequence, read N- to C-terminus: Phosphatidylserine decarboxylase proenzyme (322 aa).

Residues D90, H147, and S254 each act as charge relay system; for autoendoproteolytic cleavage activity in the active site. Residue S254 is the Schiff-base intermediate with substrate; via pyruvic acid; for decarboxylase activity of the active site. Pyruvic acid (Ser); by autocatalysis is present on S254. A disordered region spans residues 293 to 322 (PDAEPAPLPAEEIEAEHDASPLVDDKKDQV). The segment covering 308 to 322 (EHDASPLVDDKKDQV) has biased composition (basic and acidic residues).

The protein belongs to the phosphatidylserine decarboxylase family. PSD-B subfamily. Prokaryotic type I sub-subfamily. As to quaternary structure, heterodimer of a large membrane-associated beta subunit and a small pyruvoyl-containing alpha subunit. Requires pyruvate as cofactor. In terms of processing, is synthesized initially as an inactive proenzyme. Formation of the active enzyme involves a self-maturation process in which the active site pyruvoyl group is generated from an internal serine residue via an autocatalytic post-translational modification. Two non-identical subunits are generated from the proenzyme in this reaction, and the pyruvate is formed at the N-terminus of the alpha chain, which is derived from the carboxyl end of the proenzyme. The autoendoproteolytic cleavage occurs by a canonical serine protease mechanism, in which the side chain hydroxyl group of the serine supplies its oxygen atom to form the C-terminus of the beta chain, while the remainder of the serine residue undergoes an oxidative deamination to produce ammonia and the pyruvoyl prosthetic group on the alpha chain. During this reaction, the Ser that is part of the protease active site of the proenzyme becomes the pyruvoyl prosthetic group, which constitutes an essential element of the active site of the mature decarboxylase.

The protein resides in the cell membrane. It catalyses the reaction a 1,2-diacyl-sn-glycero-3-phospho-L-serine + H(+) = a 1,2-diacyl-sn-glycero-3-phosphoethanolamine + CO2. Its pathway is phospholipid metabolism; phosphatidylethanolamine biosynthesis; phosphatidylethanolamine from CDP-diacylglycerol: step 2/2. Catalyzes the formation of phosphatidylethanolamine (PtdEtn) from phosphatidylserine (PtdSer). This chain is Phosphatidylserine decarboxylase proenzyme, found in Escherichia coli O45:K1 (strain S88 / ExPEC).